Reading from the N-terminus, the 404-residue chain is Argininosuccinate synthase (404 aa).

ATP contacts are provided by residues 10–18 (AYSGGLDTS) and Ala37. L-citrulline contacts are provided by Tyr90 and Ser95. Gly120 lines the ATP pocket. Thr122, Asn126, and Asp127 together coordinate L-aspartate. Residue Asn126 participates in L-citrulline binding. The L-citrulline site is built by Arg130, Ser181, Ser190, Glu266, and Tyr278.

This sequence belongs to the argininosuccinate synthase family. Type 1 subfamily. Homotetramer.

It localises to the cytoplasm. The enzyme catalyses L-citrulline + L-aspartate + ATP = 2-(N(omega)-L-arginino)succinate + AMP + diphosphate + H(+). Its pathway is amino-acid biosynthesis; L-arginine biosynthesis; L-arginine from L-ornithine and carbamoyl phosphate: step 2/3. The chain is Argininosuccinate synthase from Erythrobacter litoralis (strain HTCC2594).